The sequence spans 344 residues: Olfactory receptor class A-like protein 4 (344 aa).

Topologically, residues 1–10 (MSEVLTVDAV) are extracellular. Residues 11-31 (LFGLLVFSGIIGNIMVIYVVF) traverse the membrane as a helical segment. At 32-47 (DCAKLCASRHLPPSDT) the chain is on the cytoplasmic side. A helical transmembrane segment spans residues 48–68 (ILVHLCLANLLTSVFRTVPIF). Residues 69 to 84 (VSDLGLQVWLTAGWCR) are Extracellular-facing. A disulfide bridge links cysteine 83 with cysteine 169. A helical membrane pass occupies residues 85–105 (VFMLLWVWWRAVGCWVTLALS). The Cytoplasmic portion of the chain corresponds to 106–130 (AFHCATLRRQHVSMGPLGHSRERRR). Residues 131-151 (VWVVLAVVWAANLLFSLPALV) form a helical membrane-spanning segment. Residues 152–186 (YTTQVRGNATVELMVISCTTRPLLGCVWEFPTFQQ) are Extracellular-facing. N-linked (GlcNAc...) asparagine glycosylation is present at asparagine 159. Residues 187-207 (GYAFASSSLALNEVLPLVLMV) traverse the membrane as a helical segment. Residues 208–246 (GTNLATLQALGKHIRTVRAGGSTGAELDRHVSSERKAGH) are Cytoplasmic-facing. Residues 247 to 267 (VIMALVALFVGCWVLQVAAVT) form a helical membrane-spanning segment. Topologically, residues 268 to 279 (YYNHNRGAHAEG) are extracellular. The helical transmembrane segment at 280–300 (LLTVAHFSASLFVGFSPLVVA) threads the bilayer. Over 301–344 (LGHGKLRRRISGILQSCMHRLKQTQDKPAEITEKDGRTTQSAMK) the chain is Cytoplasmic. Over residues 324 to 337 (TQDKPAEITEKDGR) the composition is skewed to basic and acidic residues. Residues 324 to 344 (TQDKPAEITEKDGRTTQSAMK) form a disordered region.

Belongs to the G-protein coupled receptor 1 family. As to expression, highly expressed in the olfactory rosette. Specifically localizes to crypt neurons in the olfactory neuroepithelium. Colocalizes with the inhibitory G-protein gnaia in crypt neurons. Not detected in other tissues tested.

It localises to the cell membrane. In terms of biological role, probable olfactory receptor. The polypeptide is Olfactory receptor class A-like protein 4 (ora4) (Danio rerio (Zebrafish)).